A 619-amino-acid polypeptide reads, in one-letter code: Dihydroxy-acid dehydratase (619 aa).

A Mg(2+)-binding site is contributed by aspartate 81. Cysteine 122 contributes to the [2Fe-2S] cluster binding site. Mg(2+) is bound by residues aspartate 123 and lysine 124. Lysine 124 carries the N6-carboxylysine modification. A [2Fe-2S] cluster-binding site is contributed by cysteine 195. A Mg(2+)-binding site is contributed by glutamate 494. The active-site Proton acceptor is the serine 520.

Belongs to the IlvD/Edd family. Homodimer. [2Fe-2S] cluster serves as cofactor. Requires Mg(2+) as cofactor.

It carries out the reaction (2R)-2,3-dihydroxy-3-methylbutanoate = 3-methyl-2-oxobutanoate + H2O. The enzyme catalyses (2R,3R)-2,3-dihydroxy-3-methylpentanoate = (S)-3-methyl-2-oxopentanoate + H2O. It participates in amino-acid biosynthesis; L-isoleucine biosynthesis; L-isoleucine from 2-oxobutanoate: step 3/4. It functions in the pathway amino-acid biosynthesis; L-valine biosynthesis; L-valine from pyruvate: step 3/4. Functionally, functions in the biosynthesis of branched-chain amino acids. Catalyzes the dehydration of (2R,3R)-2,3-dihydroxy-3-methylpentanoate (2,3-dihydroxy-3-methylvalerate) into 2-oxo-3-methylpentanoate (2-oxo-3-methylvalerate) and of (2R)-2,3-dihydroxy-3-methylbutanoate (2,3-dihydroxyisovalerate) into 2-oxo-3-methylbutanoate (2-oxoisovalerate), the penultimate precursor to L-isoleucine and L-valine, respectively. This is Dihydroxy-acid dehydratase from Shewanella sp. (strain ANA-3).